The primary structure comprises 164 residues: Superoxide dismutase [Cu-Zn] 3 (164 aa).

Cu cation is bound by residues His51, His53, and His68. Cys62 and Cys151 are disulfide-bonded. Residues His68, His76, His85, and Asp88 each coordinate Zn(2+). His125 serves as a coordination point for Cu cation. The Peroxisome localization signal signature appears at 162–164 (AKL).

This sequence belongs to the Cu-Zn superoxide dismutase family. As to quaternary structure, homodimer. Requires Cu cation as cofactor. Zn(2+) is required as a cofactor. As to expression, expressed in leaves (at protein level).

Its subcellular location is the peroxisome. The catalysed reaction is 2 superoxide + 2 H(+) = H2O2 + O2. Destroys radicals which are normally produced within the cells and which are toxic to biological systems. This is Superoxide dismutase [Cu-Zn] 3 (CSD3) from Arabidopsis thaliana (Mouse-ear cress).